We begin with the raw amino-acid sequence, 404 residues long: Cysteine desulfurase IscS (404 aa).

Residues 75–76 (AT), asparagine 155, glutamine 183, and 203–205 (SGH) each bind pyridoxal 5'-phosphate. Lysine 206 carries the post-translational modification N6-(pyridoxal phosphate)lysine. Residue threonine 243 coordinates pyridoxal 5'-phosphate. Cysteine 328 functions as the Cysteine persulfide intermediate in the catalytic mechanism. Cysteine 328 contributes to the [2Fe-2S] cluster binding site.

The protein belongs to the class-V pyridoxal-phosphate-dependent aminotransferase family. NifS/IscS subfamily. In terms of assembly, homodimer. Forms a heterotetramer with IscU, interacts with other sulfur acceptors. Pyridoxal 5'-phosphate serves as cofactor.

It localises to the cytoplasm. It carries out the reaction (sulfur carrier)-H + L-cysteine = (sulfur carrier)-SH + L-alanine. The protein operates within cofactor biosynthesis; iron-sulfur cluster biosynthesis. In terms of biological role, master enzyme that delivers sulfur to a number of partners involved in Fe-S cluster assembly, tRNA modification or cofactor biosynthesis. Catalyzes the removal of elemental sulfur atoms from cysteine to produce alanine. Functions as a sulfur delivery protein for Fe-S cluster synthesis onto IscU, an Fe-S scaffold assembly protein, as well as other S acceptor proteins. The polypeptide is Cysteine desulfurase IscS (Pectobacterium atrosepticum (strain SCRI 1043 / ATCC BAA-672) (Erwinia carotovora subsp. atroseptica)).